Reading from the N-terminus, the 377-residue chain is Guanine nucleotide-binding protein subunit beta (377 aa).

WD repeat units follow at residues 63–93 (GHTG…IVWN), 105–135 (LPCA…SIFS), 154–185 (GHRG…ILWD), 202–233 (GHTA…RLWD), 246–276 (GHEG…RLYD), 292–323 (GENG…YVWD), and 339–369 (SHRN…KIWA). 2 consecutive short sequence motifs (DWD box) follow at residues 220–235 (FISG…WDTR) and 263–278 (FGTG…YDIR).

The protein belongs to the WD repeat G protein beta family. As to quaternary structure, g proteins are composed of 3 units, alpha, beta and gamma. Interacts with the gamma subunits GG1 and GG2. The dimers GB1-GG1 and GB1-GG2 interact with NDL1, NDL2 and NDL3. Interacts with WNK8. Interacts with XLG2. Interacts with RACK1A, RACK1B and RACK1C. Interacts with ZAR1 (via GBeta-binding domain). Expressed in seedlings (especially at the hypocotyl/root junction), roots, leaves (restricted to veins and guard cells), and flowers. Also present in hydathods. Expressed in guard cells, mesophyll tissue of cotyledons, trichomes and whole siliques, but not in seeds.

The protein localises to the cell membrane. The protein resides in the cytoplasm. It localises to the nucleus. Functionally, guanine nucleotide-binding proteins (G proteins) are involved as a modulator or transducer in various transmembrane signaling systems. The beta and gamma chains are required for the GTPase activity, for replacement of GDP by GTP, and for G protein-effector interaction. The heterotrimeric G-protein controls defense responses to necrotrophic and vascular fungi probably by modulating cell wall-related genes expression (e.g. lower xylose content in cell walls); involved in resistance to fungal pathogens such as Alternaria brassicicola and Fusarium oxysporum. Modulates root architecture (e.g. lateral root formation). Acts with XGL3 in the positive regulation of root waving and root skewing. Involved in the asymmetric division of zygote and specification of apical and basal cell lineages. The chain is Guanine nucleotide-binding protein subunit beta (GB1) from Arabidopsis thaliana (Mouse-ear cress).